A 294-amino-acid polypeptide reads, in one-letter code: Flavin-dependent thymidylate synthase (294 aa).

The ThyX domain maps to 27 to 250 (GFIRVIDYMG…PFTYEAFEEY (224 aa)). FAD is bound by residues Thr73, 96-98 (RHR), and Glu104. Residues 93 to 96 (QWIR), 104 to 108 (EYSAR), and Arg189 contribute to the dUMP site. The ThyX motif signature appears at 96 to 106 (RHRTASVNEYS). FAD is bound by residues 205–207 (NLH) and His211. A dUMP-binding site is contributed by Arg216. The Involved in ionization of N3 of dUMP, leading to its activation role is filled by Arg216.

Belongs to the thymidylate synthase ThyX family. Homotetramer. It depends on FAD as a cofactor.

The enzyme catalyses dUMP + (6R)-5,10-methylene-5,6,7,8-tetrahydrofolate + NADPH + H(+) = dTMP + (6S)-5,6,7,8-tetrahydrofolate + NADP(+). It participates in pyrimidine metabolism; dTTP biosynthesis. Catalyzes the reductive methylation of 2'-deoxyuridine-5'-monophosphate (dUMP) to 2'-deoxythymidine-5'-monophosphate (dTMP) while utilizing 5,10-methylenetetrahydrofolate (mTHF) as the methyl donor, and NADPH and FADH(2) as the reductant. This Rickettsia bellii (strain RML369-C) protein is Flavin-dependent thymidylate synthase.